The primary structure comprises 552 residues: Putative transport protein ECA4401 (552 aa).

5 consecutive transmembrane segments (helical) span residues 4–24 (IALT…IGNW), 26–46 (IYGV…VGHV), 65–85 (FGLI…FFSS), 90–112 (GLRL…VMLH), and 158–178 (TGYA…MWLM). 2 RCK C-terminal domains span residues 191–276 (KQFE…VIGN) and 279–361 (ETSL…IVGN). Helical transmembrane passes span 371-391 (MLPV…PLMV), 393-413 (GFPV…ALVL), 439-459 (IVLF…DTLL), 464-484 (VWWI…VGIL), 493-513 (YLTL…LAFA), and 530-550 (VYPL…VLFL).

This sequence belongs to the AAE transporter (TC 2.A.81) family. YidE subfamily.

It is found in the cell membrane. This chain is Putative transport protein ECA4401, found in Pectobacterium atrosepticum (strain SCRI 1043 / ATCC BAA-672) (Erwinia carotovora subsp. atroseptica).